The chain runs to 338 residues: Fructose-1,6-bisphosphatase class 1 1 (338 aa).

Mg(2+)-binding residues include glutamate 91, aspartate 113, leucine 115, and aspartate 116. Residues 116 to 119, asparagine 208, and lysine 274 each bind substrate; that span reads DGSS. A Mg(2+)-binding site is contributed by glutamate 280.

This sequence belongs to the FBPase class 1 family. In terms of assembly, homotetramer. The cofactor is Mg(2+).

The protein resides in the cytoplasm. It catalyses the reaction beta-D-fructose 1,6-bisphosphate + H2O = beta-D-fructose 6-phosphate + phosphate. It functions in the pathway carbohydrate biosynthesis; gluconeogenesis. In Cupriavidus taiwanensis (strain DSM 17343 / BCRC 17206 / CCUG 44338 / CIP 107171 / LMG 19424 / R1) (Ralstonia taiwanensis (strain LMG 19424)), this protein is Fructose-1,6-bisphosphatase class 1 1.